The primary structure comprises 92 residues: Cytochrome c2 (92 aa).

Heme c contacts are provided by cysteine 12, cysteine 15, histidine 16, and methionine 66.

Belongs to the cytochrome c family. In terms of processing, binds 1 heme c group covalently per subunit.

Its function is as follows. Cytochrome c2 is found mainly in purple, non-sulfur, photosynthetic bacteria where it functions as the electron donor to the oxidized bacteriochlorophyll in the photophosphorylation pathway. However, it may also have a role in the respiratory chain and is found in some non-photosynthetic bacteria. This is Cytochrome c2 from Rhodocyclus tenuis (Rhodospirillum tenue).